The primary structure comprises 223 residues: DNA-directed RNA polymerase III subunit RPC7 (223 aa).

Residues 111–124 (MMPRKKCKKGDPKS) are compositionally biased toward basic and acidic residues. The tract at residues 111 to 223 (MMPRKKCKKG…SDDNMDEATY (113 aa)) is disordered. The residue at position 134 (Thr134) is a Phosphothreonine. Residues 144–156 (KTIEELEKRGEGE) show a composition bias toward basic and acidic residues. Ser158 carries the phosphoserine modification. 2 stretches are compositionally biased toward acidic residues: residues 173-198 (KDDEEDGEEDAEQEDYDEEEQEEEND) and 206-223 (NGDDFGVDSDDNMDEATY).

This sequence belongs to the eukaryotic RPC7 RNA polymerase subunit family. As to quaternary structure, component of the RNA polymerase III complex consisting of 17 subunits: a ten-subunit horseshoe-shaped catalytic core composed of POLR3A/RPC1, POLR3B/RPC2, POLR1C/RPAC1, POLR1D/RPAC2, POLR3K/RPC10, POLR2E/RPABC1, POLR2F/RPABC2, POLR2H/RPABC3, POLR2K/RPABC4 and POLR2L/RPABC5; a mobile stalk composed of two subunits POLR3H/RPC8 and CRCP/RPC9, protruding from the core and functioning primarily in transcription initiation; and additional subunits homologous to general transcription factors of the RNA polymerase II machinery, POLR3C/RPC3-POLR3F/RPC6-POLR3G/RPC7 heterotrimer required for transcription initiation and POLR3D/RPC4-POLR3E/RPC5 heterodimer involved in both transcription initiation and termination. Directly interacts with POLR3C/RPC62. Also found in a trimeric complex with POLR3C/RPC3 and POLR3GL. In terms of tissue distribution, expressed at low levels in the liver.

The protein localises to the nucleus. It is found in the cytoplasm. Functionally, DNA-dependent RNA polymerase catalyzes the transcription of DNA into RNA using the four ribonucleoside triphosphates as substrates. Specific peripheric component of RNA polymerase III (Pol III) which synthesizes small non-coding RNAs including 5S rRNA, snRNAs, tRNAs and miRNAs from at least 500 distinct genomic loci. Acts as a long tether that bridges POLR3C/RPC3-POLR3F/RPC6-POLR3G/RPC7 heterotrimer and the mobile stalk of Pol III, coordinating the dynamics of Pol III stalk and clamp modules during the transition from apo to elongation state. Pol III exists as two alternative complexes defined by the mutually exclusive incorporation of subunit POLR3G/RPC7alpha or POLR3GL/RPC7beta. POLR3G/RPC7alpha modulates Pol III transcriptome by specifically enhancing the transcription of snaR-A non-coding RNAs. At resting state, occupies the active site of apo Pol III and keeps Pol III in an autoinhibitory mode, preventing non-specific transcription. Pol III plays a key role in sensing and limiting infection by intracellular bacteria and DNA viruses. Acts as a nuclear and cytosolic DNA sensor involved in innate immune response. Can sense non-self dsDNA that serves as template for transcription into dsRNA. The non-self RNA polymerase III transcripts, such as Epstein-Barr virus-encoded RNAs (EBERs), induce type I interferon and NF-kappa-B through the RIG-I pathway. The chain is DNA-directed RNA polymerase III subunit RPC7 (Polr3g) from Mus musculus (Mouse).